The sequence spans 52 residues: UPF0391 membrane protein ACIAD3602 (52 aa).

The next 2 membrane-spanning stretches (helical) occupy residues 6 to 26 (IIFAVIALIASLLGFGGVAGL) and 30 to 50 (FAVILLVVAVILAIVGFISRG).

Belongs to the UPF0391 family.

The protein localises to the cell membrane. This is UPF0391 membrane protein ACIAD3602 from Acinetobacter baylyi (strain ATCC 33305 / BD413 / ADP1).